Consider the following 498-residue polypeptide: MFESAEIGHAIDDDTYEAALPSLREALLEAQIDLHEQAKRQIIVLINGIEGAGKGETVKLLSEWMDPRLIEVRTFDQQTDEELAHPPVWRYWRQLPAKGRMGIFFGNWYSQMLQGRVHGQYKDAVLDQAISGAERLEKMLCDEGALIFKFWFHLSKKQMKLRLKTLKDDPLHSWRISPLDWQQSKTYDKFVRFGERVLRRTSRDYAPWHVIEGVDANYRSLTVGRLLLEGMQAALNKVEPESSALTIGPLAIHNNERTLLDSLDLSLHLSKEDYQHELIAEQARLSGNLRDKRMKSHALVAVFEGNDAAGKGGAIRRVAAALDPRQYAIVPIAAPTQDERAQPYLWRFWRQIPARGKFTIFDRSWYGRVLVERVEGFCSESDWKRAYAEINDFEEQLTEAGVVVVKFWLAIDEQTQLERFQEREKIPFKRYKITEDDWRNRKKWPDYRQAVGDMVDRTSTEIAPWTLIEANDKRWARVKVLRTINEALEKAFARDKKK.

PPK2 stretches follow at residues 11 to 234 (IDDD…MQAA) and 269 to 491 (LSKE…LEKA).

Belongs to the polyphosphate kinase 2 (PPK2) family. Class II subfamily.

It carries out the reaction [phosphate](n) + ADP = [phosphate](n+1) + AMP. Uses inorganic polyphosphate (polyP) as a donor to convert AMP to ADP. Can also convert GMP to GDP, with lower efficiency. This is Polyphosphate:AMP phosphotransferase from Pseudomonas syringae pv. tomato (strain ATCC BAA-871 / DC3000).